The sequence spans 170 residues: Flavodoxin (170 aa).

The Flavodoxin-like domain occupies Ile-5 to Lys-165.

This sequence belongs to the flavodoxin family. FMN is required as a cofactor.

Low-potential electron donor to a number of redox enzymes. The protein is Flavodoxin (isiB) of Nostoc sp. (strain PCC 7120 / SAG 25.82 / UTEX 2576).